We begin with the raw amino-acid sequence, 773 residues long: Preaspterpenacid I synthase sttA (773 aa).

The tract at residues 4-359 (ISDVMKHCVP…RYHRTDLATT (356 aa)) is sesterterpenoid synthase. A Mg(2+)-binding site is contributed by Asp105. Residue Asp105 participates in substrate binding. The substrate stretch occupies residues 211–214 (RVNE). Substrate is bound at residue Asn255. 2 substrate regions span residues 259–263 (SFPKE) and 350–351 (RY). A geranylfarnesyl diphosphate synthase region spans residues 360–769 (AEDRATLIGK…RMMLLGMGPK (410 aa)). Positions 423–447 (AFKKRNSRNGKQNGTEGSKSTFTNG) are disordered. The span at 431–447 (NGKQNGTEGSKSTFTNG) shows a compositional bias: polar residues. Isopentenyl diphosphate-binding residues include Lys493, Arg496, and His525. Residues Asp532 and Asp536 each coordinate Mg(2+). Residue Arg541 participates in dimethylallyl diphosphate binding. Arg542 serves as a coordination point for isopentenyl diphosphate. Lys614, Thr615, Gln652, Asn659, and Lys669 together coordinate dimethylallyl diphosphate.

In the N-terminal section; belongs to the terpene synthase family. It in the C-terminal section; belongs to the FPP/GGPP synthase family.

It catalyses the reaction 4 isopentenyl diphosphate + dimethylallyl diphosphate = (2E,6E,10E,14E)-geranylfarnesyl diphosphate + 4 diphosphate. It carries out the reaction (2E,6E,10E,14E)-geranylfarnesyl diphosphate + H2O = preaspterpenacid acid I + diphosphate. It participates in secondary metabolite biosynthesis; terpenoid biosynthesis. Functionally, sesterterpenoid synthase; part of the gene cluster that mediates the biosynthesis of aspterpenacids. Performs both prenyl transferase and terpene cyclase activity, converting isopentenyl diphosphate and dimethylallyl diphosphate into geranylfarnesyl diphosphate (GFPP) and then converting GFPP into preaspterpenacid I. C22-oxidative modification of preaspterpenacid I by the cytochrome P450 monooxygenase sttB then leads to preaspterpenacid II. It has still to be determined how preaspterpenacid II is further modified to produce aspterpenacids. This is Preaspterpenacid I synthase sttA from Aspergillus terreus (strain NIH 2624 / FGSC A1156).